We begin with the raw amino-acid sequence, 486 residues long: Malonate-semialdehyde dehydrogenase 1 (486 aa).

Phe154, Lys178, Glu181, Arg182, and Ser231 together coordinate NAD(+). Cys286 (nucleophile) is an active-site residue. Position 386 (Glu386) interacts with NAD(+).

It belongs to the aldehyde dehydrogenase family. IolA subfamily. In terms of assembly, homotetramer.

It carries out the reaction 3-oxopropanoate + NAD(+) + CoA + H2O = hydrogencarbonate + acetyl-CoA + NADH + H(+). It catalyses the reaction 2-methyl-3-oxopropanoate + NAD(+) + CoA + H2O = propanoyl-CoA + hydrogencarbonate + NADH + H(+). The protein operates within polyol metabolism; myo-inositol degradation into acetyl-CoA; acetyl-CoA from myo-inositol: step 7/7. In terms of biological role, catalyzes the oxidation of malonate semialdehyde (MSA) and methylmalonate semialdehyde (MMSA) into acetyl-CoA and propanoyl-CoA, respectively. Is involved in a myo-inositol catabolic pathway. Bicarbonate, and not CO2, is the end-product of the enzymatic reaction. The chain is Malonate-semialdehyde dehydrogenase 1 from Oceanobacillus iheyensis (strain DSM 14371 / CIP 107618 / JCM 11309 / KCTC 3954 / HTE831).